Consider the following 97-residue polypeptide: YcgL domain-containing protein Pfl01_1389 (97 aa).

One can recognise a YcgL domain in the interval 3-87; it reads RICSIYQSSK…AEEEYIEHLP (85 aa).

The chain is YcgL domain-containing protein Pfl01_1389 from Pseudomonas fluorescens (strain Pf0-1).